A 231-amino-acid chain; its full sequence is MMTTLTARPEAITFDPQQSALIVVDMQNAYATPGGYLDLAGFDVSTTRPVIANIQTAVTAARAAGMLIIWFQNGWDEQYVEAGGPGSPNFHKSNALKTMRKQPQLQGKLLAKGSWDYQLVDELVPQPGDIVLPKPRYSGFFNTPLDSILRSRGIRHLVFTSIATNVCVESTLRDGFFLEYFGVVLEDATHQAGPEFVQKAALFNIETFFGWVSDVETFCDALSPTSFARIA.

D25 serves as the catalytic Proton acceptor. K134 is a catalytic residue. The active-site Nucleophile is C167.

The protein belongs to the isochorismatase family. RutB subfamily.

The catalysed reaction is (Z)-3-ureidoacrylate + H2O + H(+) = (Z)-3-aminoacrylate + NH4(+) + CO2. It catalyses the reaction (Z)-3-ureidoacrylate + H2O = (Z)-3-aminoacrylate + carbamate + H(+). The enzyme catalyses (Z)-2-methylureidoacrylate + H2O + H(+) = (Z)-2-methylaminoacrylate + NH4(+) + CO2. In terms of biological role, hydrolyzes ureidoacrylate to form aminoacrylate and carbamate. The carbamate hydrolyzes spontaneously, thereby releasing one of the nitrogen atoms of the pyrimidine ring as ammonia and one of its carbon atoms as CO2. This chain is Ureidoacrylate amidohydrolase RutB, found in Escherichia coli O157:H7 (strain EC4115 / EHEC).